Reading from the N-terminus, the 260-residue chain is Small ribosomal subunit protein uS2 (260 aa).

Residues valine 240–lysine 260 form a disordered region.

This sequence belongs to the universal ribosomal protein uS2 family.

The protein is Small ribosomal subunit protein uS2 of Phytoplasma australiense.